The primary structure comprises 331 residues: Ribose-phosphate pyrophosphokinase (331 aa).

55–57 (DGE) is a binding site for ATP. Residues histidine 148 and aspartate 187 each contribute to the Mg(2+) site. The active site involves lysine 211. Residues arginine 213, aspartate 237, and 241 to 245 (DTGGT) each bind D-ribose 5-phosphate.

Belongs to the ribose-phosphate pyrophosphokinase family. Class I subfamily. Homohexamer. Mg(2+) serves as cofactor.

Its subcellular location is the cytoplasm. The enzyme catalyses D-ribose 5-phosphate + ATP = 5-phospho-alpha-D-ribose 1-diphosphate + AMP + H(+). Its pathway is metabolic intermediate biosynthesis; 5-phospho-alpha-D-ribose 1-diphosphate biosynthesis; 5-phospho-alpha-D-ribose 1-diphosphate from D-ribose 5-phosphate (route I): step 1/1. Its function is as follows. Involved in the biosynthesis of the central metabolite phospho-alpha-D-ribosyl-1-pyrophosphate (PRPP) via the transfer of pyrophosphoryl group from ATP to 1-hydroxyl of ribose-5-phosphate (Rib-5-P). The sequence is that of Ribose-phosphate pyrophosphokinase from Prochlorococcus marinus subsp. pastoris (strain CCMP1986 / NIES-2087 / MED4).